Here is a 179-residue protein sequence, read N- to C-terminus: NADH-quinone oxidoreductase subunit B (179 aa).

Cys-53, Cys-54, Cys-118, and Cys-148 together coordinate [4Fe-4S] cluster.

It belongs to the complex I 20 kDa subunit family. In terms of assembly, NDH-1 is composed of 14 different subunits. Subunits NuoB, C, D, E, F, and G constitute the peripheral sector of the complex. The cofactor is [4Fe-4S] cluster.

It is found in the cell membrane. The catalysed reaction is a quinone + NADH + 5 H(+)(in) = a quinol + NAD(+) + 4 H(+)(out). In terms of biological role, NDH-1 shuttles electrons from NADH, via FMN and iron-sulfur (Fe-S) centers, to quinones in the respiratory chain. The immediate electron acceptor for the enzyme in this species is believed to be a menaquinone. Couples the redox reaction to proton translocation (for every two electrons transferred, four hydrogen ions are translocated across the cytoplasmic membrane), and thus conserves the redox energy in a proton gradient. The chain is NADH-quinone oxidoreductase subunit B from Bacillus thuringiensis (strain Al Hakam).